The sequence spans 275 residues: Large ribosomal subunit protein uL2c (275 aa).

The tract at residues 222 to 258 (GSAMNPVDHPHGGGEGRAPIGRARPVSPWGRPALGAK) is disordered.

It belongs to the universal ribosomal protein uL2 family. In terms of assembly, part of the 50S ribosomal subunit.

It localises to the plastid. The protein resides in the chloroplast. This is Large ribosomal subunit protein uL2c (rpl2) from Chlorella vulgaris (Green alga).